The sequence spans 1306 residues: Angiotensin-converting enzyme (1306 aa).

The signal sequence occupies residues 1-29; it reads MGAASGRRGPGLLLPLPLLLLLPPQPALA. Residues 30-1256 are Extracellular-facing; the sequence is LDPGLQPGNF…GLDLDAQQAR (1227 aa). N-linked (GlcNAc...) asparagine glycosylation is found at Asn-38, Asn-54, Asn-74, Glu-103, Asn-111, Ile-121, Tyr-140, Asn-146, and Asn-160. 2 consecutive Peptidase M2 domains span residues 40 to 624 and 643 to 1222; these read SADE…LGWP and VTDE…LGWP. Cysteines 157 and 165 form a disulfide. Tyr-231 serves as a coordination point for chloride. Residues Asn-318 and Asn-368 are each glycosylated (N-linked (GlcNAc...) asparagine). Cysteines 359 and 377 form a disulfide. His-390 serves as a coordination point for Zn(2+). Glu-391 (proton acceptor 1) is an active-site residue. Zn(2+) is bound by residues His-394, Pro-414, Glu-418, and Arg-442. Asn-445 and Asn-509 each carry an N-linked (GlcNAc...) asparagine glycan. His-520 functions as the Proton donor 1 in the catalytic mechanism. Chloride is bound at residue Arg-529. A disulfide bridge links Cys-545 with Cys-557. N-linked (GlcNAc...) asparagine glycosylation is found at Asn-617 and Asn-677. Asn-695 and Asn-714 each carry an N-linked (GlcNAc...) (complex) asparagine glycan. An intrachain disulfide couples Cys-757 to Cys-763. Asn-760 carries N-linked (GlcNAc...) asparagine; partial glycosylation. Chloride is bound by residues Arg-791 and Tyr-829. Asn-942 is a glycosylation site (N-linked (GlcNAc...) asparagine; partial). A disulfide bridge connects residues Cys-957 and Cys-975. Residue His-988 participates in Zn(2+) binding. The active-site Proton acceptor 2 is Glu-989. Positions 992 and 1016 each coordinate Zn(2+). Residues Trp-1090 and Arg-1094 each coordinate chloride. The Proton donor 2 role is filled by His-1118. Arg-1127 is a chloride binding site. Cys-1143 and Cys-1155 are disulfide-bonded. Asn-1191 carries N-linked (GlcNAc...) asparagine; partial glycosylation. The interval 1215-1256 is juxtamembrane stalk; the sequence is HGEKLGWPQYNWTPNSARSEGPLPDSGRVSFLGLDLDAQQAR. A helical transmembrane segment spans residues 1257–1277; the sequence is VGQWLLLFLGIALLVATLGLS. The Cytoplasmic segment spans residues 1278–1306; it reads QRLFSIRHRSLHRHSHGPQFGSEVELRHS. Residue Ser-1299 is modified to Phosphoserine.

Belongs to the peptidase M2 family. In terms of assembly, monomer and homodimer; homodimerizes following binding to an inhibitor. Interacts with calmodulin (CALM1, CALM2 or CALM3); interaction takes place in the cytoplasmic region and regulates phosphorylation and proteolytic cleavage. Zn(2+) serves as cofactor. Chloride is required as a cofactor. Post-translationally, produced following proteolytic cleavage by secretase enzymes that cleave the transmembrane form in the juxtamembrane stalk region upstream of the transmembrane region. Cleavage can take place at different sites of the juxtamembrane stalk region. In terms of processing, phosphorylated by CK2 on Ser-1299; which allows membrane retention. Phosphorylated on tyrosine residues on its extracellular part, promoting cleavage by secretase enzymes and formation of the soluble form (Angiotensin-converting enzyme, soluble form). As to expression, ubiquitously expressed, with highest levels in lung, kidney, heart, gastrointestinal system and prostate. In terms of tissue distribution, specifically expressed in spermatocytes and adult testis.

Its subcellular location is the cell membrane. The protein resides in the cytoplasm. The protein localises to the secreted. It catalyses the reaction Release of a C-terminal dipeptide, oligopeptide-|-Xaa-Yaa, when Xaa is not Pro, and Yaa is neither Asp nor Glu. Thus, conversion of angiotensin I to angiotensin II, with increase in vasoconstrictor activity, but no action on angiotensin II.. The enzyme catalyses angiotensin I + H2O = L-histidyl-L-leucine + angiotensin II. It carries out the reaction bradykinin + H2O = L-Phe-L-Arg + bradykinin(1-7). The catalysed reaction is substance P + H2O = substance P(1-9) + L-Leu-L-Met-NH2. It catalyses the reaction substance P + H2O = substance P(1-8) + Gly-L-Leu-L-Met-NH2. The enzyme catalyses substance P + H2O = L-Phe-L-Phe-Gly-L-Leu-L-Met-NH2 + substance P(1-6). It carries out the reaction neurotensin + H2O = neurotensin(1-11) + L-isoleucyl-L-leucine. The catalysed reaction is goralatide + H2O = N-acetyl-L-seryl-L-aspartate + L-lysyl-L-proline. It catalyses the reaction Met-enkephalin + H2O = L-phenylalanyl-L-methionine + L-tyrosylglycylglycine. The enzyme catalyses Leu-enkephalin + H2O = L-tyrosylglycylglycine + L-phenylalanyl-L-leucine. It carries out the reaction Met-enkephalin-Arg-Phe + H2O = L-arginyl-L-phenylalanine + Met-enkephalin. Its activity is regulated as follows. The dipeptidyl carboxypeptidase activity is strongly activated by chloride. The dipeptidyl carboxypeptidase activity is specifically inhibited by lisinopril, captopril and enalaprilat. Strongly inhibited by lisinopril and captopril. Functionally, dipeptidyl carboxypeptidase that removes dipeptides from the C-terminus of a variety of circulating hormones, such as angiotensin I, bradykinin or enkephalins, thereby playing a key role in the regulation of blood pressure, electrolyte homeostasis or synaptic plasticity. Composed of two similar catalytic domains, each possessing a functional active site, with different selectivity for substrates. Plays a major role in the angiotensin-renin system that regulates blood pressure and sodium retention by the kidney by converting angiotensin I to angiotensin II, resulting in an increase of the vasoconstrictor activity of angiotensin. Also able to inactivate bradykinin, a potent vasodilator, and therefore enhance the blood pressure response. Acts as a regulator of synaptic transmission by mediating cleavage of neuropeptide hormones, such as substance P, neurotensin or enkephalins. Catalyzes degradation of different enkephalin neuropeptides (Met-enkephalin, Leu-enkephalin, Met-enkephalin-Arg-Phe and possibly Met-enkephalin-Arg-Gly-Leu). Acts as a regulator of synaptic plasticity in the nucleus accumbens of the brain by mediating cleavage of Met-enkephalin-Arg-Phe, a strong ligand of Mu-type opioid receptor OPRM1, into Met-enkephalin. Met-enkephalin-Arg-Phe cleavage by ACE decreases activation of OPRM1, leading to long-term synaptic potentiation of glutamate release. Also acts as a regulator of hematopoietic stem cell differentiation by mediating degradation of hemoregulatory peptide N-acetyl-SDKP (AcSDKP). Acts as a regulator of cannabinoid signaling pathway by mediating degradation of hemopressin, an antagonist peptide of the cannabinoid receptor CNR1. Involved in amyloid-beta metabolism by catalyzing degradation of Amyloid-beta protein 40 and Amyloid-beta protein 42 peptides, thereby preventing plaque formation. Catalyzes cleavage of cholecystokinin (maturation of Cholecystokinin-8 and Cholecystokinin-5) and Gonadoliberin-1 (both maturation and degradation) hormones. Degradation of hemoregulatory peptide N-acetyl-SDKP (AcSDKP) and amyloid-beta proteins is mediated by the N-terminal catalytic domain, while angiotensin I and cholecystokinin cleavage is mediated by the C-terminal catalytic region. In terms of biological role, soluble form that is released in blood plasma and other body fluids following proteolytic cleavage in the juxtamembrane stalk region. Its function is as follows. Isoform produced by alternative promoter usage that is specifically expressed in spermatocytes and adult testis, and which is required for male fertility. In contrast to somatic isoforms, only contains one catalytic domain. Acts as a dipeptidyl carboxypeptidase that removes dipeptides from the C-terminus of substrates. The identity of substrates that are needed for male fertility is unknown. May also have a glycosidase activity which releases GPI-anchored proteins from the membrane by cleaving the mannose linkage in the GPI moiety. The GPIase activity was reported to be essential for the egg-binding ability of the sperm. This activity is however unclear and has been challenged by other groups, suggesting that it may be indirect. The protein is Angiotensin-converting enzyme of Homo sapiens (Human).